The sequence spans 237 residues: Eukaryotic translation initiation factor 3 subunit J (237 aa).

Residues 20-64 are disordered; it reads ANNINKWEGEDDDEDVKESWEDEEEKKDEEKPTKTEAPAKTKPNK. The segment covering 28-46 has biased composition (acidic residues); the sequence is GEDDDEDVKESWEDEEEKK. Residues 47-58 show a composition bias toward basic and acidic residues; that stretch reads DEEKPTKTEAPA. Residues 63-115 are a coiled coil; that stretch reads NKVLKAKLLEQECLEKEEEAKRLANMSTEEKLAEKLRLQKIQEESDLKSALET.

It belongs to the eIF-3 subunit J family. In terms of assembly, component of the eukaryotic translation initiation factor 3 (eIF-3) complex. The eIF-3 complex interacts with pix.

It is found in the cytoplasm. Functionally, component of the eukaryotic translation initiation factor 3 (eIF-3) complex, which is involved in protein synthesis of a specialized repertoire of mRNAs and, together with other initiation factors, stimulates binding of mRNA and methionyl-tRNAi to the 40S ribosome. The eIF-3 complex specifically targets and initiates translation of a subset of mRNAs involved in cell proliferation. This is Eukaryotic translation initiation factor 3 subunit J from Drosophila grimshawi (Hawaiian fruit fly).